The chain runs to 433 residues: Pyrimidine-nucleoside phosphorylase (433 aa).

81 to 83 (KHS) is a binding site for phosphate. Positions 88 and 90 each coordinate K(+). Phosphate-binding positions include Thr-92, 108–110 (KMS), and Thr-120. Arg-168 and Lys-187 together coordinate substrate. Leu-243, Ala-246, and Glu-255 together coordinate K(+).

It belongs to the thymidine/pyrimidine-nucleoside phosphorylase family. In terms of assembly, homodimer. The cofactor is K(+).

It catalyses the reaction uridine + phosphate = alpha-D-ribose 1-phosphate + uracil. It carries out the reaction thymidine + phosphate = 2-deoxy-alpha-D-ribose 1-phosphate + thymine. The catalysed reaction is 2'-deoxyuridine + phosphate = 2-deoxy-alpha-D-ribose 1-phosphate + uracil. Catalyzes phosphorolysis of the pyrimidine nucleosides uridine, thymidine and 2'-deoxyuridine with the formation of the corresponding pyrimidine base and ribose-1-phosphate. The polypeptide is Pyrimidine-nucleoside phosphorylase (pdp) (Staphylococcus aureus (strain MSSA476)).